A 92-amino-acid polypeptide reads, in one-letter code: Small ribosomal subunit protein uS17 (92 aa).

The protein belongs to the universal ribosomal protein uS17 family. As to quaternary structure, part of the 30S ribosomal subunit.

One of the primary rRNA binding proteins, it binds specifically to the 5'-end of 16S ribosomal RNA. This chain is Small ribosomal subunit protein uS17, found in Mycoplasma mobile (strain ATCC 43663 / 163K / NCTC 11711) (Mesomycoplasma mobile).